Here is a 562-residue protein sequence, read N- to C-terminus: Septation ring formation regulator EzrA (562 aa).

At 1–2 the chain is on the extracellular side; that stretch reads ME. The chain crosses the membrane as a helical span at residues 3–21; that stretch reads FVIGLLIVLLALFAAGYFF. Residues 22–562 lie on the Cytoplasmic side of the membrane; that stretch reads RKKIYAEIDR…VEKIKADISA (541 aa). 2 coiled-coil regions span residues 377 to 425 and 470 to 497; these read YSLL…LKKT and MEEAGAHLKQAEDIVNRASRESEELVEQ.

This sequence belongs to the EzrA family. Post-translationally, may be degraded by FtsH protease.

Its subcellular location is the cell membrane. The protein localises to the membrane raft. Negative regulator of FtsZ ring formation; modulates the frequency and position of FtsZ ring formation. Inhibits FtsZ ring formation at polar sites. Interacts either with FtsZ or with one of its binding partners to promote depolymerization. The protein is Septation ring formation regulator EzrA of Bacillus subtilis (strain 168).